We begin with the raw amino-acid sequence, 97 residues long: Cell division topological specificity factor (97 aa).

This sequence belongs to the MinE family.

Its function is as follows. Prevents the cell division inhibition by proteins MinC and MinD at internal division sites while permitting inhibition at polar sites. This ensures cell division at the proper site by restricting the formation of a division septum at the midpoint of the long axis of the cell. The sequence is that of Cell division topological specificity factor from Synechococcus sp. (strain RCC307).